A 75-amino-acid chain; its full sequence is UPF0352 protein VSAL_I1058 (75 aa).

The protein belongs to the UPF0352 family.

The sequence is that of UPF0352 protein VSAL_I1058 from Aliivibrio salmonicida (strain LFI1238) (Vibrio salmonicida (strain LFI1238)).